Reading from the N-terminus, the 513-residue chain is Serine/threonine-protein phosphatase T (513 aa).

TPR repeat units lie at residues 12-45 (ALER…DSTQ), 46-79 (SIYF…DPKN), and 80-113 (IKAY…KPND). The interval 188-513 (KNMSQEFISK…MAYSNGGFGL (326 aa)) is catalytic. Mn(2+) contacts are provided by aspartate 249, histidine 251, aspartate 278, and asparagine 310. The active-site Proton donor/acceptor is the histidine 311. Positions 359 and 434 each coordinate Mn(2+).

The protein belongs to the PPP phosphatase family. PP-5 (PP-T) subfamily. In terms of assembly, interacts (via TPR repeats) with HSP82 (via C-terminal MEEVD pentapeptide). Mg(2+) serves as cofactor. It depends on Mn(2+) as a cofactor.

It is found in the nucleus. The enzyme catalyses O-phospho-L-seryl-[protein] + H2O = L-seryl-[protein] + phosphate. It catalyses the reaction O-phospho-L-threonyl-[protein] + H2O = L-threonyl-[protein] + phosphate. With respect to regulation, stimulated by arachidonic acid and other unsaturated fatty acids, and by arachidoyl coenzyme A. In terms of biological role, protein phosphatase that specifically binds to and dephosphorylates the molecular chaperone Hsp90 (HSC82 and HSP82). Dephosphorylation positively regulates the Hsp90 chaperone machinery. In Saccharomyces cerevisiae (strain ATCC 204508 / S288c) (Baker's yeast), this protein is Serine/threonine-protein phosphatase T (PPT1).